A 186-amino-acid polypeptide reads, in one-letter code: Probable nicotinate-nucleotide adenylyltransferase (186 aa).

It belongs to the NadD family.

It catalyses the reaction nicotinate beta-D-ribonucleotide + ATP + H(+) = deamido-NAD(+) + diphosphate. Its pathway is cofactor biosynthesis; NAD(+) biosynthesis; deamido-NAD(+) from nicotinate D-ribonucleotide: step 1/1. In terms of biological role, catalyzes the reversible adenylation of nicotinate mononucleotide (NaMN) to nicotinic acid adenine dinucleotide (NaAD). The protein is Probable nicotinate-nucleotide adenylyltransferase of Tropheryma whipplei (strain Twist) (Whipple's bacillus).